The primary structure comprises 546 residues: Chromosomal replication initiator protein DnaA (546 aa).

The interval 1 to 85 (MSDPQAALRA…TRALSQHMGR (85 aa)) is domain I, interacts with DnaA modulators. Positions 85–204 (RPCSLAVTIA…EPAHNPNREK (120 aa)) are domain II. Residues 96-111 (PPQPAPQEEPPAPAPQ) show a composition bias toward pro residues. Residues 96 to 209 (PPQPAPQEEP…PNREKSLNPK (114 aa)) form a disordered region. Low complexity predominate over residues 126-145 (QTQAFQQPTQSTQPAPASQP). Residues 191–209 (IPREEPAHNPNREKSLNPK) are compositionally biased toward basic and acidic residues. The domain III, AAA+ region stretch occupies residues 205 to 421 (SLNPKHTFEN…GALIRVSAYS (217 aa)). ATP is bound by residues Gly249, Gly251, Lys252, and Thr253. A domain IV, binds dsDNA region spans residues 422–546 (SLVNEPISLE…TQRVKNHNQR (125 aa)).

It belongs to the DnaA family. In terms of assembly, oligomerizes as a right-handed, spiral filament on DNA at oriC.

Its subcellular location is the cytoplasm. Plays an essential role in the initiation and regulation of chromosomal replication. ATP-DnaA binds to the origin of replication (oriC) to initiate formation of the DNA replication initiation complex once per cell cycle. Binds the DnaA box (a 9 base pair repeat at the origin) and separates the double-stranded (ds)DNA. Forms a right-handed helical filament on oriC DNA; dsDNA binds to the exterior of the filament while single-stranded (ss)DNA is stabiized in the filament's interior. The ATP-DnaA-oriC complex binds and stabilizes one strand of the AT-rich DNA unwinding element (DUE), permitting loading of DNA polymerase. After initiation quickly degrades to an ADP-DnaA complex that is not apt for DNA replication. Binds acidic phospholipids. The polypeptide is Chromosomal replication initiator protein DnaA (Corynebacterium aurimucosum (strain ATCC 700975 / DSM 44827 / CIP 107346 / CN-1) (Corynebacterium nigricans)).